Consider the following 299-residue polypeptide: Adenylate kinase (299 aa).

Positions 1–30 (MATTTTRGARDSPFPAPSEGEIKKELNMKG) are disordered. 85–90 (GAGKGT) provides a ligand contact to ATP. The segment at 107–136 (ATGDMLREQVSKQTELGKMAKKIMDQGGLV) is NMP. AMP-binding positions include threonine 108, arginine 113, 134-136 (GLV), 163-166 (GFPR), and glutamine 170. The LID stretch occupies residues 204–241 (GRLVHPASGRSYHKEFSPPKKPMTDDVTGEPLIQRSDD). Residues arginine 205 and 214–215 (SY) each bind ATP. The disordered stretch occupies residues 212–237 (GRSYHKEFSPPKKPMTDDVTGEPLIQ). Positions 215 to 227 (YHKEFSPPKKPMT) are enriched in basic and acidic residues. AMP-binding residues include arginine 238 and arginine 249. Glutamine 277 is an ATP binding site.

This sequence belongs to the adenylate kinase family. AK2 subfamily. Monomer.

Its subcellular location is the cytoplasm. It localises to the cytosol. The protein localises to the mitochondrion intermembrane space. It carries out the reaction AMP + ATP = 2 ADP. Its function is as follows. Catalyzes the reversible transfer of the terminal phosphate group between ATP and AMP. Plays an important role in cellular energy homeostasis and in adenine nucleotide metabolism. Adenylate kinase activity is critical for regulation of the phosphate utilization and the AMP de novo biosynthesis pathways. This chain is Adenylate kinase, found in Mycosarcoma maydis (Corn smut fungus).